A 187-amino-acid polypeptide reads, in one-letter code: Large ribosomal subunit protein bL32m (187 aa).

Positions 109, 112, 122, and 125 each coordinate Zn(2+).

It belongs to the bacterial ribosomal protein bL32 family. Component of the mitochondrial ribosome large subunit (39S) which comprises a 16S rRNA and about 50 distinct proteins. MRPL32 precursor is processed by the m-AAA protease (composed of AFG3L2 and SPG7), which cleaves the N-terminal transit peptide. Cleavage by the m-AAA protease takes place prior to assembly into the large subunit, an essential step for mitochondrial ribosome (mitoribosome) assembly. Proper processing by the m-AAA protease is dependent on the zinc-binding region within the tightly folded C-terminal domain of MRPL32: zinc-dependent folding halts degradation initiated from the N-terminus and triggers the release of mature MRPL32.

The protein localises to the mitochondrion. Its function is as follows. Component of the mitochondrial large ribosomal subunit (mt-LSU). The mitochondrial ribosome (mitoribosome) is a large ribonucleoprotein complex responsible for the synthesis of proteins inside mitochondria. This is Large ribosomal subunit protein bL32m (Mrpl32) from Mus musculus (Mouse).